A 210-amino-acid chain; its full sequence is Imidazoleglycerol-phosphate dehydratase (210 aa).

Positions 185–210 are disordered; it reads PRRGGSIPSSKGVLEQAGDNNTEKSK.

Belongs to the imidazoleglycerol-phosphate dehydratase family.

The protein resides in the cytoplasm. It catalyses the reaction D-erythro-1-(imidazol-4-yl)glycerol 3-phosphate = 3-(imidazol-4-yl)-2-oxopropyl phosphate + H2O. It participates in amino-acid biosynthesis; L-histidine biosynthesis; L-histidine from 5-phospho-alpha-D-ribose 1-diphosphate: step 6/9. The chain is Imidazoleglycerol-phosphate dehydratase from Prochlorococcus marinus (strain SARG / CCMP1375 / SS120).